The sequence spans 548 residues: Folylpolyglutamate synthase (548 aa).

130–133 (GKGS) is a binding site for ATP. Residues Ser157, Glu234, and His262 each contribute to the Mg(2+) site. ATP is bound by residues Arg382 and Asp396.

The protein belongs to the folylpolyglutamate synthase family. A monovalent cation serves as cofactor.

It localises to the mitochondrion inner membrane. The protein localises to the mitochondrion matrix. It is found in the cytoplasm. It catalyses the reaction (6S)-5,6,7,8-tetrahydrofolyl-(gamma-L-Glu)(n) + L-glutamate + ATP = (6S)-5,6,7,8-tetrahydrofolyl-(gamma-L-Glu)(n+1) + ADP + phosphate + H(+). Its pathway is cofactor biosynthesis; tetrahydrofolylpolyglutamate biosynthesis. Catalyzes conversion of folates to polyglutamate derivatives allowing concentration of folate compounds in the cell and the intracellular retention of these cofactors, which are important substrates for most of the folate-dependent enzymes that are involved in one-carbon transfer reactions involved in purine, pyrimidine and amino acid synthesis. Required for methionine synthesis and maintenance of intact mitochondrial DNA. Involved in telomere maintenance. The sequence is that of Folylpolyglutamate synthase from Saccharomyces cerevisiae (strain AWRI796) (Baker's yeast).